Consider the following 232-residue polypeptide: Large ribosomal subunit protein uL1 (232 aa).

This sequence belongs to the universal ribosomal protein uL1 family. As to quaternary structure, part of the 50S ribosomal subunit.

Its function is as follows. Binds directly to 23S rRNA. The L1 stalk is quite mobile in the ribosome, and is involved in E site tRNA release. Functionally, protein L1 is also a translational repressor protein, it controls the translation of the L11 operon by binding to its mRNA. The chain is Large ribosomal subunit protein uL1 from Rhizorhabdus wittichii (strain DSM 6014 / CCUG 31198 / JCM 15750 / NBRC 105917 / EY 4224 / RW1) (Sphingomonas wittichii).